Consider the following 444-residue polypeptide: uncharacterized protein (444 aa).

Residues 1–72 (MGFLTAAIRV…RPMWNVSFLR (72 aa)) constitute a chloroplast transit peptide. The interval 77-107 (HSTPARETGDDDISKSENSSSQDGDSCTKLK) is disordered. Over residues 92-101 (SENSSSQDGD) the composition is skewed to polar residues. The CRM domain occupies 175–272 (EILTPEEHFY…KNYVQPPTEI (98 aa)). Residues 292-355 (DALRAVRKYI…CLEDEQEEDE (64 aa)) are a coiled coil. 2 disordered regions span residues 344 to 364 (EECL…ATDS) and 392 to 426 (KFPA…PNFD). Residues 346 to 357 (CLEDEQEEDEAG) are compositionally biased toward acidic residues. Residues 406–426 (DLGKAKSEGEENDDDKSPNFD) are compositionally biased toward basic and acidic residues.

The protein localises to the plastid. It localises to the chloroplast. This is an uncharacterized protein from Arabidopsis thaliana (Mouse-ear cress).